The following is a 57-amino-acid chain: uncharacterized protein (57 aa).

The disordered stretch occupies residues 26–57 (VVSTRKRLKQNTNTPPHYDTSEDEDEDNYYNY). The segment covering 46-57 (SEDEDEDNYYNY) has biased composition (acidic residues).

This is an uncharacterized protein from Autographa californica nuclear polyhedrosis virus (AcMNPV).